The primary structure comprises 689 residues: DNA ligase (689 aa).

Residues 51–55 (DSEYD), 100–101 (SL), and Glu129 each bind NAD(+). Lys131 functions as the N6-AMP-lysine intermediate in the catalytic mechanism. The NAD(+) site is built by Arg152, Glu189, Lys308, and Lys332. Zn(2+) is bound by residues Cys426, Cys429, Cys444, and Cys450. Residues 609–689 (ADEQPLKGQT…ELLALLAANS (81 aa)) enclose the BRCT domain.

It belongs to the NAD-dependent DNA ligase family. LigA subfamily. The cofactor is Mg(2+). It depends on Mn(2+) as a cofactor.

The catalysed reaction is NAD(+) + (deoxyribonucleotide)n-3'-hydroxyl + 5'-phospho-(deoxyribonucleotide)m = (deoxyribonucleotide)n+m + AMP + beta-nicotinamide D-nucleotide.. DNA ligase that catalyzes the formation of phosphodiester linkages between 5'-phosphoryl and 3'-hydroxyl groups in double-stranded DNA using NAD as a coenzyme and as the energy source for the reaction. It is essential for DNA replication and repair of damaged DNA. The chain is DNA ligase from Shewanella sp. (strain ANA-3).